The following is a 140-amino-acid chain: Secreted RxLR effector protein 37 (140 aa).

A signal peptide spans 1–22; sequence MTYRLPFVAVILFVTAKHVVLA. The RxLR-dEER motif lies at 57–76; that stretch reads RFLRQLEKKPGVNDKRDEER.

The protein belongs to the RxLR effector family.

The protein resides in the secreted. The protein localises to the host nucleus. It is found in the host cytoplasm. Its function is as follows. Secreted effector that completely suppresses the host cell death induced by cell death-inducing proteins. The polypeptide is Secreted RxLR effector protein 37 (Plasmopara viticola (Downy mildew of grapevine)).